We begin with the raw amino-acid sequence, 222 residues long: THAP domain-containing protein 6 (222 aa).

Residues 1 to 89 (MVKCCSAIGC…LKPGVIPSIF (89 aa)) form a THAP-type zinc finger. The HCFC1-binding motif (HBM) motif lies at 139 to 142 (EHSY). Residues 149–194 (KKLKHKLDHVIGELEDTKESLRNVLDREKRFQKSLRKTIRELKDEC) adopt a coiled-coil conformation.

This chain is THAP domain-containing protein 6 (THAP6), found in Homo sapiens (Human).